A 445-amino-acid polypeptide reads, in one-letter code: Argininosuccinate synthase (445 aa).

ATP contacts are provided by residues 17 to 25 (AFSGGLDTS) and A43. L-citrulline is bound at residue Y99. Residues G129 and T131 each contribute to the ATP site. L-aspartate contacts are provided by T131, N135, and D136. N135 serves as a coordination point for L-citrulline. D136 lines the ATP pocket. R139 and S192 together coordinate L-citrulline. D194 contributes to the ATP binding site. 3 residues coordinate L-citrulline: T201, E203, and E280.

Belongs to the argininosuccinate synthase family. Type 2 subfamily. As to quaternary structure, homotetramer.

It is found in the cytoplasm. It carries out the reaction L-citrulline + L-aspartate + ATP = 2-(N(omega)-L-arginino)succinate + AMP + diphosphate + H(+). It functions in the pathway amino-acid biosynthesis; L-arginine biosynthesis; L-arginine from L-ornithine and carbamoyl phosphate: step 2/3. This Burkholderia ambifaria (strain ATCC BAA-244 / DSM 16087 / CCUG 44356 / LMG 19182 / AMMD) (Burkholderia cepacia (strain AMMD)) protein is Argininosuccinate synthase.